Here is a 66-residue protein sequence, read N- to C-terminus: Large ribosomal subunit protein bL32 (66 aa).

The protein belongs to the bacterial ribosomal protein bL32 family.

The sequence is that of Large ribosomal subunit protein bL32 from Rickettsia conorii (strain ATCC VR-613 / Malish 7).